We begin with the raw amino-acid sequence, 465 residues long: Ribulose bisphosphate carboxylase large chain (465 aa).

Residue lysine 4 is modified to N6,N6,N6-trimethyllysine. The substrate site is built by asparagine 113 and threonine 163. The Proton acceptor role is filled by lysine 165. Lysine 167 is a binding site for substrate. Mg(2+)-binding residues include lysine 191, aspartate 193, and glutamate 194. An N6-carboxylysine modification is found at lysine 191. Histidine 284 functions as the Proton acceptor in the catalytic mechanism. Residues arginine 285, histidine 317, and serine 369 each contribute to the substrate site.

Belongs to the RuBisCO large chain family. Type I subfamily. Heterohexadecamer of 8 large chains and 8 small chains; disulfide-linked. The disulfide link is formed within the large subunit homodimers. The cofactor is Mg(2+). The disulfide bond which can form in the large chain dimeric partners within the hexadecamer appears to be associated with oxidative stress and protein turnover.

The protein resides in the plastid. It is found in the chloroplast. It carries out the reaction 2 (2R)-3-phosphoglycerate + 2 H(+) = D-ribulose 1,5-bisphosphate + CO2 + H2O. It catalyses the reaction D-ribulose 1,5-bisphosphate + O2 = 2-phosphoglycolate + (2R)-3-phosphoglycerate + 2 H(+). In terms of biological role, ruBisCO catalyzes two reactions: the carboxylation of D-ribulose 1,5-bisphosphate, the primary event in carbon dioxide fixation, as well as the oxidative fragmentation of the pentose substrate in the photorespiration process. Both reactions occur simultaneously and in competition at the same active site. This chain is Ribulose bisphosphate carboxylase large chain, found in Cornus canadensis (Bunchberry dogwood).